Here is a 282-residue protein sequence, read N- to C-terminus: Dof zinc finger protein 4 (282 aa).

A Dof-type zinc finger spans residues 45-99; it reads VKCPRCESTNTKFCYYNNYNLSQPRHFCKSCRRYWTKGGVLRNVPVGGGCRKTKR. Zn(2+)-binding residues include C47, C50, C72, and C75. Positions 89–161 are disordered; that stretch reads PVGGGCRKTK…TTPATPSSNT (73 aa). 2 stretches are compositionally biased toward low complexity: residues 102 to 117 and 125 to 161; these read SSSA…TAAT and RASA…SSNT.

The protein resides in the nucleus. Its function is as follows. Transcription factor that may transactivate seed storage protein genes in developing seeds. This is Dof zinc finger protein 4 from Oryza sativa subsp. japonica (Rice).